The primary structure comprises 256 residues: MEAQKLSAQEIIQFIGNAEKKTGVKVTLSGMPSFKSAGFLAENGRPNFKALANKGIQVLGDFHTHYSLKIIIGDWQAVRPLLEGLTENKDYTIEFEGRNSAVPLLDTRAINARIEPGAIIRDQVTIGDNAVIMMGAIINIGAEIGEGTMIDMGAVLGGRATVGKNSHIGAGAVLAGVIEPASAEPVRVGDNVLVGANAVVIEGVQVGSGSVVAAGAIVTQDVPENVVVAGVPARIIKEIDEKTAQKTALEDALRNL.

This sequence belongs to the transferase hexapeptide repeat family. DapH subfamily.

The enzyme catalyses (S)-2,3,4,5-tetrahydrodipicolinate + acetyl-CoA + H2O = L-2-acetamido-6-oxoheptanedioate + CoA. Its pathway is amino-acid biosynthesis; L-lysine biosynthesis via DAP pathway; LL-2,6-diaminopimelate from (S)-tetrahydrodipicolinate (acetylase route): step 1/3. Functionally, catalyzes the transfer of an acetyl group from acetyl-CoA to tetrahydrodipicolinate. The polypeptide is 2,3,4,5-tetrahydropyridine-2,6-dicarboxylate N-acetyltransferase (Lactococcus lactis subsp. cremoris (strain MG1363)).